Here is a 714-residue protein sequence, read N- to C-terminus: Nucleolin (714 aa).

The segment at 1–303 (MVKLAKAGKT…AKKQKVEGSE (303 aa)) is disordered. Lys9, Lys15, and Lys16 each carry N6-acetyllysine. Residues 24 to 42 (VEEDSEDEEMSEEEDDSSG) show a composition bias toward acidic residues. Phosphoserine is present on residues Ser28, Ser34, Ser40, and Ser41. A compositionally biased stretch (low complexity) spans 55 to 106 (ATATPAKKVVVSQTKKVAVPTPAKKAAVTPGKKAAATPAKKAVTPAKAVATP). Residues 57–64 (ATPAKKVV) form repeat 1. The interval 57–134 (ATPAKKVVVS…GAVTPAKGAK (78 aa)) is 8 X 8 AA tandem repeats of X-T-P-X-K-K-X-X. Phosphoserine is present on Ser66. Thr68, Thr75, Thr83, and Thr91 each carry phosphothreonine. 3 consecutive repeat copies span residues 74-81 (PTPAKKAA), 82-89 (VTPGKKAA), and 90-97 (ATPAKKAV). N6-acetyllysine is present on Lys95. Thr98 is modified (phosphothreonine). Residues 98–103 (TPAKAV) form a 5; truncated repeat. At Lys101 the chain carries N6-acetyllysine. Repeat 6 spans residues 104 to 111 (ATPGKKGA). Thr105 carries the post-translational modification Phosphothreonine. Lys108 carries the N6-acetyllysine modification. Phosphothreonine is present on Thr112. Residue Lys115 is modified to N6-acetyllysine. Tandem repeats lie at residues 119 to 126 (ATPGKKGA) and 127 to 134 (VTPAKGAK). Thr120 carries the post-translational modification Phosphothreonine. Lys123 is modified (N6-acetyllysine). 2 positions are modified to phosphoserine: Ser144 and Ser157. Positions 144 to 170 (SDEDEDDDDDEDDSDEDEEDEEEDEFE) are enriched in acidic residues. Residues 171–187 (PPVVKGKQGKVAAAAPA) show a composition bias toward low complexity. Position 188 is a phosphoserine (Ser188). The segment covering 188 to 216 (SEDEDEEEDEEEEEEDEEEEDDSEEEEAM) has biased composition (acidic residues). Phosphothreonine is present on Thr219. Acidic residues predominate over residues 240-272 (EEDDDDEEEDEDEEEDEEEEEDEEEEEEEEEEE). Basic and acidic residues predominate over residues 285 to 301 (MTKQKEVPEAKKQKVEG). A Glycyl lysine isopeptide (Lys-Gly) (interchain with G-Cter in SUMO1); alternate cross-link involves residue Lys298. Lys298 participates in a covalent cross-link: Glycyl lysine isopeptide (Lys-Gly) (interchain with G-Cter in SUMO2); alternate. Phosphoserine is present on Ser302. RRM domains lie at 308–384 (FNLF…KPKG) and 394–467 (RTLL…YTGE). Position 319 is an N6-acetyllysine (Lys319). A Glycyl lysine isopeptide (Lys-Gly) (interchain with G-Cter in SUMO1); alternate cross-link involves residue Lys325. Residue Lys325 forms a Glycyl lysine isopeptide (Lys-Gly) (interchain with G-Cter in SUMO2); alternate linkage. At Lys349 the chain carries N6-acetyllysine. The residue at position 357 (Ser357) is a Phosphoserine. Position 368 is a phosphothreonine (Thr368). A Glycyl lysine isopeptide (Lys-Gly) (interchain with G-Cter in SUMO2) cross-link involves residue Lys371. Lys378 participates in a covalent cross-link: Glycyl lysine isopeptide (Lys-Gly) (interchain with G-Cter in SUMO2); alternate. An N6-acetyllysine; alternate modification is found at Lys378. Lys399 is modified (N6-acetyllysine). At Ser402 the chain carries Phosphoserine. Phosphothreonine is present on Thr406. Residues Lys428 and Lys445 each carry the N6-acetyllysine modification. Phosphoserine is present on residues Ser459 and Ser461. An N6-acetyllysine mark is found at Lys468 and Lys477. One can recognise an RRM 3 domain in the interval 486-560 (KTLVLSNLSY…RTIRLELQGP (75 aa)). A Glycyl lysine isopeptide (Lys-Gly) (interchain with G-Cter in SUMO2); alternate cross-link involves residue Lys513. Lys513 bears the N6-acetyllysine; alternate mark. Lys521 is subject to N6-acetyllysine. Ser563 carries the post-translational modification Phosphoserine. At Lys572 the chain carries N6-acetyllysine. One can recognise an RRM 4 domain in the interval 572-647 (KTLFVKGLSE…NKVTLDWAKP (76 aa)). Residue Lys577 forms a Glycyl lysine isopeptide (Lys-Gly) (interchain with G-Cter in SUMO2); alternate linkage. Lys577 bears the N6-acetyllysine; alternate mark. Ser580 bears the Phosphoserine mark. A Glycyl lysine isopeptide (Lys-Gly) (interchain with G-Cter in SUMO1); alternate cross-link involves residue Lys589. Lys589 is covalently cross-linked (Glycyl lysine isopeptide (Lys-Gly) (interchain with G-Cter in SUMO2); alternate). Ser591 and Ser619 each carry phosphoserine. Residue Lys624 forms a Glycyl lysine isopeptide (Lys-Gly) (interchain with G-Cter in SUMO2) linkage. The disordered stretch occupies residues 642-714 (LDWAKPKGEG…KPQGKKTKFE (73 aa)). Lys646 is modified (N6-acetyllysine). Residues 650–703 (EGGFGGRGGGRGGFGGRGGGRGGGRGGFGGRGRGGFGGRGGFRGGRGGGGGGGD) are compositionally biased toward gly residues. Asymmetric dimethylarginine occurs at positions 656, 660, 666, 670, 674, 680, 682, 688, and 692. Arg695 is subject to Asymmetric dimethylarginine; alternate. Residue Arg695 is modified to Omega-N-methylarginine; alternate.

Identified in a IGF2BP1-dependent mRNP granule complex containing untranslated mRNAs. Component of the SWAP complex that consists of NPM1, NCL/nucleolin, PARP1 and SWAP70. Component of a complex which is at least composed of HTATSF1/Tat-SF1, the P-TEFb complex components CDK9 and CCNT1, RNA polymerase II, SUPT5H, and NCL/nucleolin. Interacts with AICDA. Interacts with APTX. Interacts with C1QBP. Interacts with ERBB4. Interacts (via C-terminus) with FMR1 isoform 6 (via N-terminus). Interacts with GZF1; this interaction is important for nucleolar localization of GZF1. Interacts with NSUN2. Interacts with NVL. Interacts (via N-terminus domain) with SETX. Interacts (via RRM1 and C-terminal RRM4/Arg/Gly-rich domains) with TERT; the interaction is important for nucleolar localization of TERT. Interacts with WDR46. Interacts with ZFP36. Interacts with LRRC34. Interacts with RRP1B. Interacts with HNRNPU; this interaction occurs during mitosis. Interacts with RIOK1; RIOK1 recruits NCL to PRMT5 for symmetrically methylation. Interacts with ZBTB7B. Interacts with MDK; this interaction promotes NCL clustering and lateral movements of this complex into lipid rafts leading to MDK internalization. Interacts with HDGF. Interacts with ALKBH2. Interacts with IGFBP5; this interaction is necessary for IGFBP5 localization to the nucleus. Interacts with DDX24 (when ubiquitinated); this interaction may be important during ribosome biogenesis. Some glutamate residues are glycylated by TTLL8. This modification occurs exclusively on glutamate residues and results in a glycine chain on the gamma-carboxyl group. Post-translationally, symmetrically methylated by PRMT5.

It is found in the nucleus. It localises to the nucleolus. The protein resides in the cytoplasm. In terms of biological role, nucleolin is the major nucleolar protein of growing eukaryotic cells. It is found associated with intranucleolar chromatin and pre-ribosomal particles. It induces chromatin decondensation by binding to histone H1. It is thought to play a role in pre-rRNA transcription and ribosome assembly. May play a role in the process of transcriptional elongation. Binds RNA oligonucleotides with 5'-UUAGGG-3' repeats more tightly than the telomeric single-stranded DNA 5'-TTAGGG-3' repeats. The polypeptide is Nucleolin (NCL) (Mesocricetus auratus (Golden hamster)).